Consider the following 176-residue polypeptide: Mitochondrial inner membrane protein Mpv17 (176 aa).

4 helical membrane passes run Val18–Val38, Thr53–Leu73, Gly94–Leu114, and Leu131–Leu151.

This sequence belongs to the peroxisomal membrane protein PXMP2/4 family.

Its subcellular location is the mitochondrion inner membrane. Functionally, non-selective channel that modulates the membrane potential under normal conditions and oxidative stress, and is involved in mitochondrial homeostasis. Involved in mitochondrial deoxynucleoside triphosphates (dNTP) pool homeostasis and mitochondrial DNA (mtDNA) maintenance. May be involved in the regulation of reactive oxygen species metabolism and the control of oxidative phosphorylation. In Bos taurus (Bovine), this protein is Mitochondrial inner membrane protein Mpv17.